The chain runs to 397 residues: Phosphoglycerate kinase (397 aa).

Residues 25-27, R41, 64-67, R118, and R151 each bind substrate; these read DLN and HLGR. Residues K202, E324, and 350–353 contribute to the ATP site; that span reads GGDT.

This sequence belongs to the phosphoglycerate kinase family. As to quaternary structure, monomer.

It localises to the cytoplasm. It catalyses the reaction (2R)-3-phosphoglycerate + ATP = (2R)-3-phospho-glyceroyl phosphate + ADP. Its pathway is carbohydrate degradation; glycolysis; pyruvate from D-glyceraldehyde 3-phosphate: step 2/5. The sequence is that of Phosphoglycerate kinase from Leptothrix cholodnii (strain ATCC 51168 / LMG 8142 / SP-6) (Leptothrix discophora (strain SP-6)).